Here is a 278-residue protein sequence, read N- to C-terminus: Shikimate dehydrogenase (NADP(+)) (278 aa).

Residues 14–16 (SKS) and threonine 61 contribute to the shikimate site. Lysine 65 functions as the Proton acceptor in the catalytic mechanism. Residues asparagine 86 and aspartate 102 each contribute to the shikimate site. Residues 127–131 (GAGGA), 151–156 (NRTASK), and methionine 221 contribute to the NADP(+) site. Residue tyrosine 223 coordinates shikimate. Glycine 245 contributes to the NADP(+) binding site.

It belongs to the shikimate dehydrogenase family. As to quaternary structure, homodimer.

It catalyses the reaction shikimate + NADP(+) = 3-dehydroshikimate + NADPH + H(+). The protein operates within metabolic intermediate biosynthesis; chorismate biosynthesis; chorismate from D-erythrose 4-phosphate and phosphoenolpyruvate: step 4/7. Its function is as follows. Involved in the biosynthesis of the chorismate, which leads to the biosynthesis of aromatic amino acids. Catalyzes the reversible NADPH linked reduction of 3-dehydroshikimate (DHSA) to yield shikimate (SA). This Saccharophagus degradans (strain 2-40 / ATCC 43961 / DSM 17024) protein is Shikimate dehydrogenase (NADP(+)).